The sequence spans 400 residues: Serine/threonine transporter SstT (400 aa).

Transmembrane regions (helical) follow at residues 14-34 (IIIA…VTPY), 48-68 (SVAP…FQVG), 76-96 (VLLL…IASL), 136-156 (AISE…GLAM), 177-197 (IIHK…AVTF), 211-231 (LLVV…PILV), 285-305 (IPLG…VLTL), 311-331 (LGIH…TISA), and 349-371 (CSLF…IISV).

This sequence belongs to the dicarboxylate/amino acid:cation symporter (DAACS) (TC 2.A.23) family.

It is found in the cell inner membrane. It carries out the reaction L-serine(in) + Na(+)(in) = L-serine(out) + Na(+)(out). The catalysed reaction is L-threonine(in) + Na(+)(in) = L-threonine(out) + Na(+)(out). Functionally, involved in the import of serine and threonine into the cell, with the concomitant import of sodium (symport system). The chain is Serine/threonine transporter SstT from Acinetobacter baumannii (strain AB307-0294).